The chain runs to 187 residues: Meiotically up-regulated protein C1442.13c (187 aa).

Disordered stretches follow at residues 15-46 (QWEN…LSNE) and 119-145 (IQEG…PAIN). Basic residues predominate over residues 26–41 (PPRKPKIVQPKKKPSK). The G-patch domain occupies 145–187 (NNGKGKQLLEMMGWSRGKGLGSENQGMVDPVVAVVKNNKQGLH).

It localises to the nucleus. It is found in the cytoplasm. The protein resides in the cytoskeleton. Its subcellular location is the microtubule organizing center. The protein localises to the spindle pole body. Has a role in meiosis and sporulation. Required for meiotic chromosome segregation. This Schizosaccharomyces pombe (strain 972 / ATCC 24843) (Fission yeast) protein is Meiotically up-regulated protein C1442.13c.